The following is a 225-amino-acid chain: Alpha-tubulin N-acetyltransferase 1 (225 aa).

Residues 1–190 (MEFPFDVDAL…NNFVIFEGFF (190 aa)) form the N-acetyltransferase domain. Lys56 bears the N6-acetyllysine; by autocatalysis mark. 124–137 (FYIHESLQRHGHGR) lines the acetyl-CoA pocket. Lys146 bears the N6-acetyllysine; by autocatalysis mark. An acetyl-CoA-binding site is contributed by 160–169 (SQKLLKFLNK). Residues 195–225 (PPARKLPPKRAEGDIKPYSSSDRESGLPQGW) form a disordered region. The span at 203 to 219 (KRAEGDIKPYSSSDRES) shows a compositional bias: basic and acidic residues. Lys210 carries the N6-acetyllysine; by autocatalysis modification.

Belongs to the acetyltransferase ATAT1 family. As to quaternary structure, component of the BBSome complex. Interacts with AP2 alpha-adaptins, including AP2A2, but not with AP1 gamma-adaptin (AP1G1/AP1G2); this interaction is required for efficient alpha-tubulin acetylation, hence clathrin-coated pits are sites of microtubule acetylation. In terms of processing, autoacetylation strongly increases tubulin acetylation.

It is found in the cytoplasm. The protein localises to the membrane. The protein resides in the clathrin-coated pit. Its subcellular location is the cell junction. It localises to the focal adhesion. It is found in the cell projection. The protein localises to the axon. The protein resides in the cytoskeleton. Its subcellular location is the spindle. The catalysed reaction is L-lysyl-[alpha-tubulin] + acetyl-CoA = N(6)-acetyl-L-lysyl-[alpha-tubulin] + CoA + H(+). Functionally, specifically acetylates 'Lys-40' in alpha-tubulin on the lumenal side of microtubules. Promotes microtubule destabilization and accelerates microtubule dynamics; this activity may be independent of acetylation activity. Acetylates alpha-tubulin with a slow enzymatic rate, due to a catalytic site that is not optimized for acetyl transfer. Enters the microtubule through each end and diffuses quickly throughout the lumen of microtubules. Acetylates only long/old microtubules because of its slow acetylation rate since it does not have time to act on dynamically unstable microtubules before the enzyme is released. Required for normal sperm flagellar function. Promotes directional cell locomotion and chemotaxis, through AP2A2-dependent acetylation of alpha-tubulin at clathrin-coated pits that are concentrated at the leading edge of migrating cells. May facilitate primary cilium assembly. The chain is Alpha-tubulin N-acetyltransferase 1 from Bos taurus (Bovine).